The sequence spans 333 residues: D-fructose 1,6-bisphosphatase class 2/sedoheptulose 1,7-bisphosphatase (333 aa).

Residues D33, E57, D85, and E88 each contribute to the Mn(2+) site. Residues 88 to 90 (EGT), Y119, 164 to 166 (RTR), and 186 to 188 (DGD) contribute to the substrate site. Position 213 (E213) interacts with Mn(2+).

Belongs to the FBPase class 2 family. As to quaternary structure, homotetramer. It depends on Mn(2+) as a cofactor.

The enzyme catalyses beta-D-fructose 1,6-bisphosphate + H2O = beta-D-fructose 6-phosphate + phosphate. It carries out the reaction D-sedoheptulose 1,7-bisphosphate + H2O = D-sedoheptulose 7-phosphate + phosphate. The protein operates within carbohydrate biosynthesis; Calvin cycle. In terms of biological role, catalyzes the hydrolysis of fructose 1,6-bisphosphate (Fru 1,6-P2) and sedoheptulose 1,7-bisphosphate (Sed 1,7-P2) to fructose 6-phosphate and sedoheptulose 7-phosphate, respectively. The sequence is that of D-fructose 1,6-bisphosphatase class 2/sedoheptulose 1,7-bisphosphatase from Prochlorococcus marinus (strain MIT 9301).